Reading from the N-terminus, the 436-residue chain is Homeobox protein PKNOX1 (436 aa).

Residues 1 to 20 (MMATQTLSIDSYQDGQQMQV) show a composition bias toward polar residues. Residues 1–49 (MMATQTLSIDSYQDGQQMQVVTELKTEQDPNCSEPDAEGVSPPPVESQT) form a disordered region. Residues Ser33 and Ser41 each carry the phosphoserine modification. In terms of domain architecture, MEIS N-terminal spans 80–163 (GSEGTTSASF…MNSETLLSGE (84 aa)). A DNA-binding region (homeobox; TALE-type) is located at residues 259-321 (SKNKRGVLPK…NARRRILQPM (63 aa)). Residues 401-436 (AGQSEDESVDSTEEDAGALAPAHISGLVLENSDSLQ) are disordered. Over residues 404–416 (SEDESVDSTEEDA) the composition is skewed to acidic residues.

It belongs to the TALE/MEIS homeobox family. Interacts with MN1. Ubiquitous. Isoform 2 is expressed in all examined tissues except in bone marrow.

The protein resides in the nucleus. In terms of biological role, activates transcription in the presence of PBX1A and HOXA1. The protein is Homeobox protein PKNOX1 of Homo sapiens (Human).